The primary structure comprises 403 residues: PP2A regulatory subunit TAP46 (403 aa).

2 disordered regions span residues 158-184 (ERRG…LDDD) and 351-403 (ANSS…TPCG). 2 stretches are compositionally biased toward acidic residues: residues 174-184 (ETEEDDVLDDD) and 366-375 (EDDEEDDDDA). Residues 376–391 (AQDKARAWDDWKDDNP) show a composition bias toward basic and acidic residues.

It belongs to the IGBP1/TAP42 family.

Involved in the regulation of the TOR signaling pathway. Seems to act as a regulator of PP2A catalytic activity. In Nicotiana tabacum (Common tobacco), this protein is PP2A regulatory subunit TAP46.